The primary structure comprises 361 residues: Eukaryotic translation initiation factor 3 subunit F (361 aa).

The interval 1 to 86 is disordered; the sequence is MATPAVPVSA…PAPALPGPAL (86 aa). An N-acetylalanine modification is found at Ala-2. Composition is skewed to pro residues over residues 9 to 20 and 30 to 40; these read SAPPATPAPVPA and VPAPTPAPAAA. Positions 41 to 78 are enriched in low complexity; the sequence is PVPAAAPASSSDPAAAAATTAAPGQTPASAQAPAQTPA. Ser-50 bears the Phosphoserine; by CDK11; in vitro mark. The MPN domain occupies 96 to 226; sequence VRLHPVILAS…IKAYVSTLMG (131 aa). At Lys-242 the chain carries N6-acetyllysine. Residue Ser-262 is modified to Phosphoserine.

Belongs to the eIF-3 subunit F family. As to quaternary structure, component of the eukaryotic translation initiation factor 3 (eIF-3) complex, which is composed of 13 subunits: EIF3A, EIF3B, EIF3C, EIF3D, EIF3E, EIF3F, EIF3G, EIF3H, EIF3I, EIF3J, EIF3K, EIF3L and EIF3M. The eIF-3 complex appears to include 3 stable modules: module A is composed of EIF3A, EIF3B, EIF3G and EIF3I; module B is composed of EIF3F, EIF3H, and EIF3M; and module C is composed of EIF3C, EIF3D, EIF3E, EIF3K and EIF3L. EIF3C of module C binds EIF3B of module A and EIF3H of module B, thereby linking the three modules. EIF3J is a labile subunit that binds to the eIF-3 complex via EIF3B. The eIF-3 complex interacts with RPS6KB1 under conditions of nutrient depletion. Mitogenic stimulation leads to binding and activation of a complex composed of MTOR and RPTOR, leading to phosphorylation and release of RPS6KB1 and binding of EIF4B to eIF-3. Interacts with RNF139; the interaction leads to protein translation inhibitions in a ubiquitination-dependent manner. Interacts with DTX1, the interaction is required for deubiquitinating activity towards NOTCH1. Post-translationally, phosphorylation is enhanced upon serum stimulation. Phosphorylated during apoptosis by caspase-processed CDK11.

It localises to the cytoplasm. The catalysed reaction is Thiol-dependent hydrolysis of ester, thioester, amide, peptide and isopeptide bonds formed by the C-terminal Gly of ubiquitin (a 76-residue protein attached to proteins as an intracellular targeting signal).. Functionally, component of the eukaryotic translation initiation factor 3 (eIF-3) complex, which is required for several steps in the initiation of protein synthesis. The eIF-3 complex associates with the 40S ribosome and facilitates the recruitment of eIF-1, eIF-1A, eIF-2:GTP:methionyl-tRNAi and eIF-5 to form the 43S pre-initiation complex (43S PIC). The eIF-3 complex stimulates mRNA recruitment to the 43S PIC and scanning of the mRNA for AUG recognition. The eIF-3 complex is also required for disassembly and recycling of post-termination ribosomal complexes and subsequently prevents premature joining of the 40S and 60S ribosomal subunits prior to initiation. The eIF-3 complex specifically targets and initiates translation of a subset of mRNAs involved in cell proliferation, including cell cycling, differentiation and apoptosis, and uses different modes of RNA stem-loop binding to exert either translational activation or repression. Deubiquitinates activated NOTCH1, promoting its nuclear import, thereby acting as a positive regulator of Notch signaling. The polypeptide is Eukaryotic translation initiation factor 3 subunit F (Pan troglodytes (Chimpanzee)).